Consider the following 157-residue polypeptide: Ribosome-binding factor A (157 aa).

Positions 127 to 157 are disordered; the sequence is QQQFGSEEASVEDEVLGDDVADDADETEGKD. A compositionally biased stretch (acidic residues) spans 135–157; it reads ASVEDEVLGDDVADDADETEGKD.

This sequence belongs to the RbfA family. As to quaternary structure, monomer. Binds 30S ribosomal subunits, but not 50S ribosomal subunits or 70S ribosomes.

It is found in the cytoplasm. In terms of biological role, one of several proteins that assist in the late maturation steps of the functional core of the 30S ribosomal subunit. Associates with free 30S ribosomal subunits (but not with 30S subunits that are part of 70S ribosomes or polysomes). Required for efficient processing of 16S rRNA. May interact with the 5'-terminal helix region of 16S rRNA. In Shewanella baltica (strain OS195), this protein is Ribosome-binding factor A.